The primary structure comprises 476 residues: Ubiquitin-conjugating enzyme E2 variant 3 (476 aa).

Positions 2–145 constitute a UEV domain; sequence EFSAETLRQQ…EEELPLYSLS (144 aa). 185 to 213 contributes to the NAD(+) binding site; sequence GDMALACLLAVSAKGTAGKLLLLDPTDGE.

It in the N-terminal section; belongs to the ubiquitin-conjugating enzyme family. UEV subfamily. In the C-terminal section; belongs to the LDH/MDH superfamily. As to quaternary structure, homodimer.

Functionally, possible negative regulator of polyubiquitination. The polypeptide is Ubiquitin-conjugating enzyme E2 variant 3 (uevld) (Xenopus tropicalis (Western clawed frog)).